A 191-amino-acid polypeptide reads, in one-letter code: Transposon Tn1546 resolvase (191 aa).

A Resolvase/invertase-type recombinase catalytic domain is found at Arg-2 to Gly-138. The O-(5'-phospho-DNA)-serine intermediate role is filled by Ser-10. Residues Val-168–Ser-187 constitute a DNA-binding region (H-T-H motif).

Belongs to the site-specific recombinase resolvase family.

In terms of biological role, resolvase catalyzes the resolution (a site-specific recombination) of the cointegrated replicon to yield the final transposition products. This chain is Transposon Tn1546 resolvase, found in Enterococcus faecium (Streptococcus faecium).